The following is a 201-amino-acid chain: Recombination protein RecR (201 aa).

The segment at 60–75 (CSCCGNVDTSDPCTIC) adopts a C4-type zinc-finger fold. In terms of domain architecture, Toprim spans 83 to 178 (ATLIVVEDVS…RVTRLAHGVP (96 aa)).

It belongs to the RecR family.

In terms of biological role, may play a role in DNA repair. It seems to be involved in an RecBC-independent recombinational process of DNA repair. It may act with RecF and RecO. This chain is Recombination protein RecR, found in Brucella ovis (strain ATCC 25840 / 63/290 / NCTC 10512).